The following is an 87-amino-acid chain: U14-lycotoxin-Ls1c (87 aa).

A signal peptide spans 1-20 (MNSKVFAVLLLLALLTCILS). One can recognise a WAP domain in the interval 21-66 (EKYCPTPRNTSCKKMNIKNNCCRDSDCTSNAFCCAEPCGNFCHKAS). Intrachain disulfides connect Cys-24–Cys-54, Cys-32–Cys-58, Cys-41–Cys-53, Cys-42–Cys-80, and Cys-47–Cys-62.

It belongs to the venom protein 11 family. 01 (wap-1) subfamily. Contains 5 disulfide bonds. As to expression, expressed by the venom gland.

Its subcellular location is the secreted. Functionally, has antibacterial activity. This is U14-lycotoxin-Ls1c from Lycosa singoriensis (Wolf spider).